Here is a 161-residue protein sequence, read N- to C-terminus: Lipoprotein signal peptidase (161 aa).

3 helical membrane passes run 6 to 26, 67 to 87, and 90 to 110; these read ILFLITAGLVLLLDQFTKFYV, GLFFTSVTLIAAGLILFYLIK, and VSDLMMVIPLALVLAGAMGNL. Active-site residues include Asp-121 and Asp-139. A helical membrane pass occupies residues 134–154; the sequence is AFNIADTAISIGVLFLVVDMI.

It belongs to the peptidase A8 family.

The protein resides in the cell inner membrane. It catalyses the reaction Release of signal peptides from bacterial membrane prolipoproteins. Hydrolyzes -Xaa-Yaa-Zaa-|-(S,diacylglyceryl)Cys-, in which Xaa is hydrophobic (preferably Leu), and Yaa (Ala or Ser) and Zaa (Gly or Ala) have small, neutral side chains.. It functions in the pathway protein modification; lipoprotein biosynthesis (signal peptide cleavage). Functionally, this protein specifically catalyzes the removal of signal peptides from prolipoproteins. This is Lipoprotein signal peptidase from Syntrophus aciditrophicus (strain SB).